The following is a 389-amino-acid chain: Large envelope protein (389 aa).

The residue at position 1 (Met1) is an N-acetylmethionine. Gly2 is lipidated: N-myristoyl glycine; by host. Positions Gly2–Ala108 are pre-S1. The pre-S stretch occupies residues Gly2 to Asn163. The Virion surface; in external conformation portion of the chain corresponds to Gly2–Gly170. Over Gly2–Arg242 the chain is Intravirion; in internal conformation. A disordered region spans residues Ile73–Gln107. The span at Ser85–Thr95 shows a compositional bias: polar residues. Residues Met109–Asn163 are pre-S2. A helical transmembrane segment spans residues Leu171–Ile191. The Intravirion; in external conformation portion of the chain corresponds to Pro192 to Arg242. Residues Phe243–Tyr263 traverse the membrane as a helical segment. Residues Gln264 to Ser337 are Virion surface-facing. N-linked (GlcNAc...) asparagine; by host glycosylation is present at Asn309. A helical membrane pass occupies residues Leu338 to Ile358. Topologically, residues Trp359–Trp364 are intravirion. The helical transmembrane segment at Gly365 to Val387 threads the bilayer. Residues Tyr388 to Ile389 lie on the Virion surface side of the membrane.

The protein belongs to the orthohepadnavirus major surface antigen family. As to quaternary structure, interacts (via its myristoylated pre-S1 region) with the host SLC10A1/NTCP; this interaction is essential for viral entry. In terms of assembly, in its internal form (Li-HBsAg), interacts with the capsid protein and with the isoform S. Interacts with host chaperone CANX. Associates with host chaperone CANX through its pre-S2 N glycan; this association may be essential for isoform M proper secretion. As to quaternary structure, interacts with isoform L. Interacts with the antigens of satellite virus HDV (HDVAgs); this interaction is required for encapsidation of HDV genomic RNA. In terms of processing, isoform M is N-terminally acetylated by host at a ratio of 90%, and N-glycosylated by host at the pre-S2 region. Myristoylated; this modification is essential for its interaction with the host protein SLC10A1/NTCP.

Its subcellular location is the virion membrane. Its function is as follows. The large envelope protein exists in two topological conformations, one which is termed 'external' or Le-HBsAg and the other 'internal' or Li-HBsAg. In its external conformation the protein attaches the virus to cell receptors and thereby initiating infection. This interaction determines the species specificity and liver tropism. This attachment induces virion internalization predominantly through caveolin-mediated endocytosis. The large envelope protein also assures fusion between virion membrane and endosomal membrane. In its internal conformation the protein plays a role in virion morphogenesis and mediates the contact with the nucleocapsid like a matrix protein. In terms of biological role, the middle envelope protein plays an important role in the budding of the virion. It is involved in the induction of budding in a nucleocapsid independent way. In this process the majority of envelope proteins bud to form subviral lipoprotein particles of 22 nm of diameter that do not contain a nucleocapsid. The sequence is that of Large envelope protein from Hepatitis B virus genotype B1 subtype adw (isolate Japan/pJDW233/1988) (HBV-B).